We begin with the raw amino-acid sequence, 717 residues long: MSNDEFPTDQPAVVTCGLPYANGDLHVGHLRTYVDGDALSRALRRIGQQTAFVSGSDMHGTPVAVNAAEEGVAPREFALDFHETYAETFPQFNIEFDNYGHTDDETNVELTQEFVRSWVENDHVHEKEIEVAWDTEEDQPLPDRYVEGTCPYCGEQARGDECDEGCQRHLEPGEIEAPVSTLTGNPAEYRTREHKFLRLADFQEYLQGFLDRLEGTDNAQNQPREWIEGELQDLCITRDMDWGVDYPEDVDGGDELVLYVWVDAPIEYVASTKQYTERVGDDEYDWEAVWKIDSEERHGTEWDDEWADDSGEIIHVIGRDIIQHHAVFWPAMLRGAGYNEPRSILATGFVGIDGNALSTSRNRAVWADEYLDAGFHPDLFRYYIATGAQIDTDVDFSWDRFQERVNGELVGNVGNFIYRSLLFAERNYDGTPDAAVSDDVRGRIEDAIADFEAAVREYDIRELAEIAIELSNYGNEYIQRNEPWNLVDDDPEEAEQVIRDCVQLTKAVAVLMQPVLPGKAERLWGQLGEQGSVADVTLDSALEAPPAEFGEPAELFEQVEDDHIEALNEELQERVEEASEASAEASNEGGEAAGDEVDDGDVDTADLQPLVEDRISFEDFEGVDMRVGEIRSAEPVEGADKLLRLEVDIGHEVRQVVAGLRQLHDAEKLPGTRVILLANMEKAELFGIESNGMVLAAGDEADLLTTHEDAPLGTRIK.

The short motif at 19–29 (PYANGDLHVGH) is the 'HIGH' region element. 4 residues coordinate Zn(2+): C150, C153, C162, and C166. The 'KMSKS' region motif lies at 356-360 (ALSTS). T359 serves as a coordination point for ATP. The segment at 573-603 (ERVEEASEASAEASNEGGEAAGDEVDDGDVD) is disordered. Low complexity predominate over residues 580–590 (EASAEASNEGG). Positions 593–603 (AGDEVDDGDVD) are enriched in acidic residues. Residues 619–717 (DFEGVDMRVG…EDAPLGTRIK (99 aa)) form the tRNA-binding domain.

Belongs to the class-I aminoacyl-tRNA synthetase family. MetG type 1 subfamily. Homodimer. Zn(2+) is required as a cofactor.

The protein localises to the cytoplasm. The enzyme catalyses tRNA(Met) + L-methionine + ATP = L-methionyl-tRNA(Met) + AMP + diphosphate. In terms of biological role, is required not only for elongation of protein synthesis but also for the initiation of all mRNA translation through initiator tRNA(fMet) aminoacylation. The polypeptide is Methionine--tRNA ligase (Haloarcula marismortui (strain ATCC 43049 / DSM 3752 / JCM 8966 / VKM B-1809) (Halobacterium marismortui)).